Consider the following 61-residue polypeptide: Small ribosomal subunit protein uS14 (61 aa).

Residues C24, C27, C40, and C43 each coordinate Zn(2+).

Belongs to the universal ribosomal protein uS14 family. Zinc-binding uS14 subfamily. Part of the 30S ribosomal subunit. Contacts proteins S3 and S10. The cofactor is Zn(2+).

Functionally, binds 16S rRNA, required for the assembly of 30S particles and may also be responsible for determining the conformation of the 16S rRNA at the A site. This Caldanaerobacter subterraneus subsp. tengcongensis (strain DSM 15242 / JCM 11007 / NBRC 100824 / MB4) (Thermoanaerobacter tengcongensis) protein is Small ribosomal subunit protein uS14.